Reading from the N-terminus, the 147-residue chain is Proteinase inhibitor type-2 (147 aa).

The N-terminal stretch at 1-25 is a signal peptide; the sequence is MAVHKEVSFVAYLLIVLGMFLYVDA. Tandem repeats lie at residues 25–81 and 82–141. 8 cysteine pairs are disulfide-bonded: Cys28-Cys116, Cys32-Cys112, Cys40-Cys122, Cys52-Cys89, Cys55-Cys73, Cys56-Cys85, Cys62-Cys98, and Cys115-Cys133.

Belongs to the protease inhibitor I20 (potato type II proteinase inhibitor) family.

This chain is Proteinase inhibitor type-2, found in Solanum tuberosum (Potato).